The chain runs to 66 residues: Muscarinic toxin alpha (66 aa).

Intrachain disulfides connect cysteine 3-cysteine 24, cysteine 17-cysteine 42, cysteine 46-cysteine 58, and cysteine 59-cysteine 64.

The protein belongs to the three-finger toxin family. Short-chain subfamily. Aminergic toxin sub-subfamily. As to expression, expressed by the venom gland.

The protein localises to the secreted. Selectively binds with high-affinity to the a2B-adrenoceptor subtype (ADRA2B). The toxin reversibly binds to ADRA2B, and its mode of inhibition is non-competitive. The toxin has also been described to bind with high affinity to all muscarinic receptor subtypes (Ki=23 nM (on CHRM1), Ki=44 nM (on CHRM2), Ki=3 nM (on CHRM3), Ki=5 nM (on CHRM4), and Ki=8 nM (on CHRM5)) but no other data support these affinity values. The polypeptide is Muscarinic toxin alpha (Dendroaspis polylepis polylepis (Black mamba)).